The sequence spans 445 residues: Xylose isomerase (445 aa).

Residues H107 and D110 contribute to the active site. 7 residues coordinate Mg(2+): E238, E274, H277, D302, D313, D315, and D345.

The protein belongs to the xylose isomerase family. Homotetramer. The cofactor is Mg(2+).

The protein resides in the cytoplasm. It catalyses the reaction alpha-D-xylose = alpha-D-xylulofuranose. The protein is Xylose isomerase (xylA) of Priestia megaterium (strain DSM 319 / IMG 1521) (Bacillus megaterium).